Reading from the N-terminus, the 251-residue chain is Uridylate kinase (251 aa).

11-14 (KLSG) contributes to the ATP binding site. Residues 19–24 (GNQGFG) form an involved in allosteric activation by GTP region. Glycine 53 provides a ligand contact to UMP. The ATP site is built by glycine 54 and arginine 58. Residues aspartate 73 and 134 to 141 (TGNPYFTT) each bind UMP. 3 residues coordinate ATP: threonine 161, tyrosine 167, and aspartate 170.

The protein belongs to the UMP kinase family. As to quaternary structure, homohexamer.

Its subcellular location is the cytoplasm. The catalysed reaction is UMP + ATP = UDP + ADP. The protein operates within pyrimidine metabolism; CTP biosynthesis via de novo pathway; UDP from UMP (UMPK route): step 1/1. Allosterically activated by GTP. Inhibited by UTP. Its function is as follows. Catalyzes the reversible phosphorylation of UMP to UDP. The chain is Uridylate kinase from Protochlamydia amoebophila (strain UWE25).